A 282-amino-acid polypeptide reads, in one-letter code: Probable endonuclease 4 (282 aa).

Residues His67, His107, Glu144, Asp178, His181, His215, Asp228, His230, and Glu260 each coordinate Zn(2+).

It belongs to the AP endonuclease 2 family. Requires Zn(2+) as cofactor.

It carries out the reaction Endonucleolytic cleavage to 5'-phosphooligonucleotide end-products.. In terms of biological role, endonuclease IV plays a role in DNA repair. It cleaves phosphodiester bonds at apurinic or apyrimidinic (AP) sites, generating a 3'-hydroxyl group and a 5'-terminal sugar phosphate. The sequence is that of Probable endonuclease 4 from Methanoculleus marisnigri (strain ATCC 35101 / DSM 1498 / JR1).